A 522-amino-acid polypeptide reads, in one-letter code: Ribonuclease Y (522 aa).

The helical transmembrane segment at 7-27 threads the bilayer; the sequence is STILYCLFFFFLGIAAVLAFI. Residues 212 to 272 enclose the KH domain; that stretch reads TTSTVGVPTD…VRREVARMSL (61 aa). The 94-residue stretch at 338-431 folds into the HD domain; that stretch reads VLRHSVEVAF…VATADACSAS (94 aa).

The protein belongs to the RNase Y family.

The protein resides in the cell membrane. Endoribonuclease that initiates mRNA decay. This is Ribonuclease Y from Rhodopirellula baltica (strain DSM 10527 / NCIMB 13988 / SH1).